The sequence spans 406 residues: Leucine aminopeptidase 1 (406 aa).

An N-terminal signal peptide occupies residues 1-18; sequence MKVTNASLLALLLPAVSG. The propeptide occupies 19–94; the sequence is RFVETGEPDR…LRAMTASRKK (76 aa). N-linked (GlcNAc...) asparagine glycosylation is present at N186. The Zn(2+) site is built by H194, D213, E252, and D279. Residue N306 is glycosylated (N-linked (GlcNAc...) asparagine). C328 and C332 are joined by a disulfide. Position 361 (H361) interacts with Zn(2+).

Belongs to the peptidase M28 family. M28E subfamily. As to quaternary structure, monomer. Zn(2+) is required as a cofactor.

It localises to the secreted. Functionally, extracellular aminopeptidase that allows assimilation of proteinaceous substrates. The sequence is that of Leucine aminopeptidase 1 (LAP1) from Chaetomium globosum (strain ATCC 6205 / CBS 148.51 / DSM 1962 / NBRC 6347 / NRRL 1970) (Soil fungus).